A 69-amino-acid polypeptide reads, in one-letter code: VLIIAVLFLTACQLTTAETYSRGRQKHRARRSTDKNSKWTRECTRSGGACYSHNQCCDDFCSTATSTCV.

The first 17 residues, 1 to 17 (VLIIAVLFLTACQLTTA), serve as a signal peptide directing secretion. Residues 18–41 (ETYSRGRQKHRARRSTDKNSKWTR) constitute a propeptide that is removed on maturation. Disulfide bonds link Cys-43–Cys-57, Cys-50–Cys-61, and Cys-56–Cys-68.

The protein belongs to the conotoxin O1 superfamily. Expressed by the venom duct.

The protein localises to the secreted. This is Conotoxin Eb6.22 (E1) from Conus ebraeus (Hebrew cone).